The primary structure comprises 561 residues: Mercuric reductase (561 aa).

The 65-residue stretch at 1–65 (MTTLKITGMT…AVAGLGYEAT (65 aa)) folds into the HMA domain. 2 residues coordinate a metal cation: cysteine 11 and cysteine 14. Residues alanine 110, glycine 130, and threonine 135 each contribute to the FAD site. Residues cysteine 136 and cysteine 141 are joined by a disulfide bond. FAD-binding residues include lysine 145, alanine 211, aspartate 403, and valine 411. Residues cysteine 558 and cysteine 559 each contribute to the Hg(2+) site.

The protein belongs to the class-I pyridine nucleotide-disulfide oxidoreductase family. As to quaternary structure, homodimer. It depends on FAD as a cofactor.

The catalysed reaction is Hg + NADP(+) + H(+) = Hg(2+) + NADPH. Resistance to Hg(2+) in bacteria appears to be governed by a specialized system which includes mercuric reductase. MerA protein is responsible for volatilizing mercury as Hg(0). The polypeptide is Mercuric reductase (merA) (Enterobacter agglomerans (Erwinia herbicola)).